A 625-amino-acid polypeptide reads, in one-letter code: Chaperone protein HtpG (625 aa).

The a; substrate-binding stretch occupies residues 1-330 (MAKQVQNFNA…SSDLSLNVSR (330 aa)). The segment at 331–545 (ELLQQDRQVT…SADPSAHMQK (215 aa)) is b. A c region spans residues 546-625 (LMAQMGKEYA…MVQAADSTKH (80 aa)).

The protein belongs to the heat shock protein 90 family. As to quaternary structure, homodimer.

It localises to the cytoplasm. Functionally, molecular chaperone. Has ATPase activity. In Bdellovibrio bacteriovorus (strain ATCC 15356 / DSM 50701 / NCIMB 9529 / HD100), this protein is Chaperone protein HtpG.